A 288-amino-acid chain; its full sequence is uncharacterized protein (288 aa).

Over residues 1-12 (MTEGRCAQHPDG) the composition is skewed to basic and acidic residues. Residues 1-20 (MTEGRCAQHPDGLDVQDVCD) form a disordered region.

This sequence belongs to the class IV-like SAM-binding methyltransferase superfamily. RNA methyltransferase TrmH family.

This is an uncharacterized protein from Mycobacterium tuberculosis (strain ATCC 25618 / H37Rv).